Reading from the N-terminus, the 440-residue chain is Glutamyl-tRNA reductase (440 aa).

Residues 50 to 53 (TCNR), Ser-109, 114 to 116 (EPQ), and Gln-120 each bind substrate. The Nucleophile role is filled by Cys-51. Residue 189–194 (GAGEMA) participates in NADP(+) binding.

It belongs to the glutamyl-tRNA reductase family. Homodimer.

The enzyme catalyses (S)-4-amino-5-oxopentanoate + tRNA(Glu) + NADP(+) = L-glutamyl-tRNA(Glu) + NADPH + H(+). It functions in the pathway porphyrin-containing compound metabolism; protoporphyrin-IX biosynthesis; 5-aminolevulinate from L-glutamyl-tRNA(Glu): step 1/2. Its function is as follows. Catalyzes the NADPH-dependent reduction of glutamyl-tRNA(Glu) to glutamate 1-semialdehyde (GSA). This is Glutamyl-tRNA reductase from Nitratidesulfovibrio vulgaris (strain ATCC 29579 / DSM 644 / CCUG 34227 / NCIMB 8303 / VKM B-1760 / Hildenborough) (Desulfovibrio vulgaris).